Consider the following 304-residue polypeptide: dTDP-4-dehydrorhamnose reductase (304 aa).

Residues 16-18 (GML), 42-43 (DI), and 66-68 (AWT) each bind NADH. Residues 17–18 (ML), 42–43 (DI), and 66–68 (AWT) contribute to the NADPH site. 107–108 (TD) contributes to the dTDP-beta-L-rhamnose binding site. NADH is bound by residues Tyr-131 and Lys-135. NADPH-binding residues include Tyr-131 and Lys-135. Residue Tyr-131 is the Proton donor/acceptor of the active site. Residue Trp-157 coordinates dTDP-beta-L-rhamnose.

The protein belongs to the dTDP-4-dehydrorhamnose reductase family. As to quaternary structure, homodimer. Requires Mg(2+) as cofactor.

It catalyses the reaction dTDP-beta-L-rhamnose + NADP(+) = dTDP-4-dehydro-beta-L-rhamnose + NADPH + H(+). The protein operates within carbohydrate biosynthesis; dTDP-L-rhamnose biosynthesis. It functions in the pathway antibiotic biosynthesis; streptomycin biosynthesis. Its function is as follows. Involved in the biosynthesis of the streptose moiety of streptomycin. Catalyzes the reduction of dTDP-6-deoxy-L-lyxo-4-hexulose to yield dTDP-L-rhamnose. RmlD uses NADH and NADPH nearly equally well. The chain is dTDP-4-dehydrorhamnose reductase from Streptomyces griseus.